Consider the following 215-residue polypeptide: 2-phospho-L-lactate guanylyltransferase (215 aa).

It belongs to the CofC family. Homodimer.

It catalyses the reaction (2S)-2-phospholactate + GTP + H(+) = (2S)-lactyl-2-diphospho-5'-guanosine + diphosphate. The protein operates within cofactor biosynthesis; coenzyme F420 biosynthesis. Functionally, guanylyltransferase that catalyzes the activation of (2S)-2-phospholactate (2-PL) as (2S)-lactyl-2-diphospho-5'-guanosine, via the condensation of 2-PL with GTP. It is involved in the biosynthesis of coenzyme F420, a hydride carrier cofactor. The polypeptide is 2-phospho-L-lactate guanylyltransferase (Methanoculleus marisnigri (strain ATCC 35101 / DSM 1498 / JR1)).